The sequence spans 345 residues: 1-aminocyclopropane-1-carboxylate oxidase homolog 7 (345 aa).

Residue lysine 16 forms a Glycyl lysine isopeptide (Lys-Gly) (interchain with G-Cter in ubiquitin) linkage. The 100-residue stretch at lysine 194–serine 293 folds into the Fe2OG dioxygenase domain. Fe cation contacts are provided by histidine 218, aspartate 220, and histidine 274. Residue arginine 284 coordinates 2-oxoglutarate.

The protein belongs to the iron/ascorbate-dependent oxidoreductase family. Fe(2+) is required as a cofactor.

In Arabidopsis thaliana (Mouse-ear cress), this protein is 1-aminocyclopropane-1-carboxylate oxidase homolog 7.